A 619-amino-acid chain; its full sequence is Polyadenylate-binding protein 1-like (619 aa).

RRM domains are found at residues 11 to 89 (ASLY…WSQR), 99 to 175 (GNIF…HFKS), 191 to 268 (TNIY…RAQK), and 294 to 370 (VNLY…LAQR). Positions 431 to 458 (PAPRWTSQPPRPSSAYPPGASMVRPPVV) are disordered. The 78-residue stretch at 533 to 610 (QEPLTASMLA…AVAVLQAHQA (78 aa)) folds into the PABC domain.

The protein belongs to the polyadenylate-binding protein type-1 family. As to expression, expressed in ovary and testis. Also expressed in pancreas, liver and thymus, and at lower levels in other somatic tissues including brain and lung.

The protein resides in the cytoplasm. Its function is as follows. Poly(A)-binding protein involved in oocyte maturation and early embryo development. It is required for cytosolic mRNA polyadenylation and translational activation of maternally stored mRNA in oocytes. The protein is Polyadenylate-binding protein 1-like of Homo sapiens (Human).